We begin with the raw amino-acid sequence, 782 residues long: MTSIIKLTTLSGVQEESALCYLLQVDEFRFLLDCGWDEHFSMDIIDSLRKHVHQIDAVLLSHPDPLHLGALPYAVGKLGLNCAIYATIPVYKMGQMFMYDLYQSRHNTEDFTLFTLDDVDAAFDKIQQLKFSQIVNLKGKGHGLSITPLPAGHMIGGTIWKIVKDGEEEIVYAVDFNHKREIHLNGCSLEMLSRPSLLITDSFNATYVQPRRKQRDEQLLTNVLETLRGDGNVLIAVDTAGRVLELAQLLDQIWRTKDAGLGVYSLALLNNVSYNVVEFSKSQVEWMSDKLMRCFEDKRNNPFQFRHLSLCHGLSDLARVPSPKVVLASQPDLECGFSRDLFIQWCQDPKNSIILTYRTTPGTLARFLIDNPSEKVTEIELRKRVKLEGKELEEYLEKEKLKKEAAKKLEQSKEADIDSSDESDAEEDIDQPSAHKTKHDLMMKGEGSRKGSFFKQAKKSYPMFPAPEERIKWDEYGEIIKPEDFLVPELQATEEEKSKLESGLTNGDEPMDQDLSDVPTKCISTTESIEIKARVTYIDYEGRSDGDSIKKIINQMKPRQLIIVHGPPEASQDLAECCRAFGGKDIKVYMPKLHETVDATSETHIYQVRLKDSLVSSLQFCKAKDAELAWIDGVLDMRVSKVDTGVILEEGELKDDGEDSEMQVDAPSDSSVIAQQKAMKSLFGDDEKETGEESEIIPTLEPLPPHEVPGHQSVFMNEPRLSDFKQVLLREGIQAEFVGGVLVCNNQVAVRRTETGRIGLEGCLCQDFYRIRDLLYEQYAIV.

A compositionally biased stretch (basic and acidic residues) spans 407-416; the sequence is KKLEQSKEAD. The segment at 407-452 is disordered; the sequence is KKLEQSKEADIDSSDESDAEEDIDQPSAHKTKHDLMMKGEGSRKGS. Over residues 417–430 the composition is skewed to acidic residues; that stretch reads IDSSDESDAEEDID. Phosphoserine occurs at positions 419, 420, and 423. Over residues 439–449 the composition is skewed to basic and acidic residues; that stretch reads HDLMMKGEGSR. Ser-660 carries the post-translational modification Phosphoserine.

Belongs to the metallo-beta-lactamase superfamily. RNA-metabolizing metallo-beta-lactamase-like family. CPSF2/YSH1 subfamily. As to quaternary structure, component of the cleavage and polyadenylation specificity factor (CPSF) complex, composed of CPSF1, CPSF2, CPSF3, CPSF4 and FIP1L1. Interacts with CPSF3, CSTF2 and SYMPK. Interacts with ZC3H3.

It is found in the nucleus. Its function is as follows. Component of the cleavage and polyadenylation specificity factor (CPSF) complex that play a key role in pre-mRNA 3'-end formation, recognizing the AAUAAA signal sequence and interacting with poly(A) polymerase and other factors to bring about cleavage and poly(A) addition. Involved in the histone 3' end pre-mRNA processing. This chain is Cleavage and polyadenylation specificity factor subunit 2 (CPSF2), found in Bos taurus (Bovine).